The chain runs to 81 residues: Putative membrane protein insertion efficiency factor (81 aa).

The interval 60–81 is disordered; that stretch reads WNPGGYDPVPTHNTSNSSPMAE. The span at 70–81 shows a compositional bias: polar residues; sequence THNTSNSSPMAE.

It belongs to the UPF0161 family.

It is found in the cell inner membrane. Could be involved in insertion of integral membrane proteins into the membrane. The protein is Putative membrane protein insertion efficiency factor of Stutzerimonas stutzeri (strain A1501) (Pseudomonas stutzeri).